The following is a 628-amino-acid chain: MEKINYEEVGLKVGLEIHRQLDTKKLFSPVPSKLSDDVDFTFKRRLRPTMSELGEIDPAALEEFKKGRTYIYEANNELGDLVYMDEEPPRGPDEEALEVALQIAYLLNAKPVDEVYYMRKIVIDGSNVSGFQRTAIIATDGKVETPWGTVGIPTICLEEDAARIIETRDREVIYRIDRLGIPLVEISTTPDIHHPEQAKVVAKFIGDALRATRKVKRGLGTIRQDLNVSIKGGARIEIKGVQELDMIPVIIEREVQRQLNLLKIRDELRKRGVTPEDIKEEFYDVTDIFKDTKSKIIARILKKGGKVLAIKLPKFKGLIGMEIQPGRRLGTEFADRAKKYVPGIFHSDELPNYGITQEEVEKVRKLLELEEEDAFVLVAAQEEIAKKALKEVIIRAREAIIGVPEETRRALPDGNTQYMRPLPGKARMYPETDIPPIRITEEMKRRIKENLPELPQAKVEKYVKEFGIDKSMAQTIVDDERDELFEELIEMGVKPSLAASILAVVLKGLRKEVPIENITEEHIKGAFRLYLEGKIAKEAFEEIFKELAQHPEKTAEEVAQEKGLTLLSEEEVRKIVDEVVNQYIDVIKEKGMGAMGLIMGRVMTKVRGKADGKLVSQIVKEKIREISG.

This sequence belongs to the GatB/GatE family. GatE subfamily. In terms of assembly, heterodimer of GatD and GatE.

It catalyses the reaction L-glutamyl-tRNA(Gln) + L-glutamine + ATP + H2O = L-glutaminyl-tRNA(Gln) + L-glutamate + ADP + phosphate + H(+). Functionally, allows the formation of correctly charged Gln-tRNA(Gln) through the transamidation of misacylated Glu-tRNA(Gln) in organisms which lack glutaminyl-tRNA synthetase. The reaction takes place in the presence of glutamine and ATP through an activated gamma-phospho-Glu-tRNA(Gln). The GatDE system is specific for glutamate and does not act on aspartate. The polypeptide is Glutamyl-tRNA(Gln) amidotransferase subunit E (Pyrococcus furiosus (strain ATCC 43587 / DSM 3638 / JCM 8422 / Vc1)).